Here is a 538-residue protein sequence, read N- to C-terminus: Nicotinate phosphoribosyltransferase (538 aa).

Tyr-21 and Thr-210 together coordinate nicotinate. His-213 carries the post-translational modification Phosphohistidine. Nicotinate is bound at residue Arg-318. Thr-380 provides a ligand contact to 5-phospho-alpha-D-ribose 1-diphosphate.

The protein belongs to the NAPRTase family. Homodimer. It depends on Mg(2+) as a cofactor. The cofactor is Mn(2+). Post-translationally, transiently phosphorylated on a His residue during the reaction cycle. Phosphorylation strongly increases the affinity for substrates and increases the rate of nicotinate D-ribonucleotide production. Dephosphorylation regenerates the low-affinity form of the enzyme, leading to product release.

The protein localises to the cytoplasm. It localises to the cytosol. It carries out the reaction nicotinate + 5-phospho-alpha-D-ribose 1-diphosphate + ATP + H2O = nicotinate beta-D-ribonucleotide + ADP + phosphate + diphosphate. The protein operates within cofactor biosynthesis; NAD(+) biosynthesis; nicotinate D-ribonucleotide from nicotinate: step 1/1. Functionally, catalyzes the first step in the biosynthesis of NAD from nicotinic acid, the ATP-dependent synthesis of beta-nicotinate D-ribonucleotide from nicotinate and 5-phospho-D-ribose 1-phosphate. Helps prevent cellular oxidative stress via its role in NAD biosynthesis. The chain is Nicotinate phosphoribosyltransferase (NAPRT) from Bos taurus (Bovine).